A 277-amino-acid polypeptide reads, in one-letter code: Urease accessory protein UreD (277 aa).

This sequence belongs to the UreD family. In terms of assembly, ureD, UreF and UreG form a complex that acts as a GTP-hydrolysis-dependent molecular chaperone, activating the urease apoprotein by helping to assemble the nickel containing metallocenter of UreC. The UreE protein probably delivers the nickel.

It is found in the cytoplasm. Its function is as follows. Required for maturation of urease via the functional incorporation of the urease nickel metallocenter. The protein is Urease accessory protein UreD of Rhodopseudomonas palustris (strain BisB18).